Reading from the N-terminus, the 171-residue chain is UPF0725 protein At3g25080 (171 aa).

The protein belongs to the UPF0725 (EMB2204) family.

The polypeptide is UPF0725 protein At3g25080 (Arabidopsis thaliana (Mouse-ear cress)).